A 1318-amino-acid polypeptide reads, in one-letter code: DNA-directed RNA polymerase subunit beta' (1318 aa).

Zn(2+) is bound by residues cysteine 221, cysteine 295, cysteine 302, and cysteine 305.

The protein belongs to the RNA polymerase beta' chain family. RpoC2 subfamily. As to quaternary structure, in cyanobacteria the RNAP catalytic core is composed of 2 alpha, 1 beta, 1 beta', 1 gamma and 1 omega subunit. When a sigma factor is associated with the core the holoenzyme is formed, which can initiate transcription. Zn(2+) is required as a cofactor.

It catalyses the reaction RNA(n) + a ribonucleoside 5'-triphosphate = RNA(n+1) + diphosphate. In terms of biological role, DNA-dependent RNA polymerase catalyzes the transcription of DNA into RNA using the four ribonucleoside triphosphates as substrates. The polypeptide is DNA-directed RNA polymerase subunit beta' (Synechococcus sp. (strain ATCC 27144 / PCC 6301 / SAUG 1402/1) (Anacystis nidulans)).